A 257-amino-acid polypeptide reads, in one-letter code: Deoxyribose-phosphate aldolase (257 aa).

D102 functions as the Proton donor/acceptor in the catalytic mechanism. The active-site Schiff-base intermediate with acetaldehyde is the K166. The Proton donor/acceptor role is filled by K198.

The protein belongs to the DeoC/FbaB aldolase family. DeoC type 2 subfamily.

The protein localises to the cytoplasm. It catalyses the reaction 2-deoxy-D-ribose 5-phosphate = D-glyceraldehyde 3-phosphate + acetaldehyde. It functions in the pathway carbohydrate degradation; 2-deoxy-D-ribose 1-phosphate degradation; D-glyceraldehyde 3-phosphate and acetaldehyde from 2-deoxy-alpha-D-ribose 1-phosphate: step 2/2. Catalyzes a reversible aldol reaction between acetaldehyde and D-glyceraldehyde 3-phosphate to generate 2-deoxy-D-ribose 5-phosphate. The sequence is that of Deoxyribose-phosphate aldolase from Shewanella halifaxensis (strain HAW-EB4).